Here is a 365-residue protein sequence, read N- to C-terminus: MTSVFKSPSTYVQGRNVTTDIGTHAESLGDTALLVADEIVMDMIESDVHESLAEAGLDGSSVVFNGESSEDEIERIASVAVDEGADIVIGAGGGKALDTAKAVREEVGGAMVSMPTIASMDAPTSSLSVIYSEHGEFEDYWYYEQHPDLVIVDTEVVAAAPARFLRSGIADGLATWFEADAVAQSGGDNEVGGKPTRAGHKLAELCYETLREHGAGALDAVEHDAVTESVDAVIEANTLLSGLGFESGGLAAAHSVHNGLTQLAETHDATHGEKVNIGTITQLVLEGHSDARIEEFIEFSVELGLPVTLGEIGITNPEQVDLDVVAEAACDEAETIHDEPFDVTPAMVRDALLTADEMGRRVRDR.

Residues Asp37, Gly94, Lys95, Thr116, Ser119, Ser125, Leu127, and Tyr131 each contribute to the NAD(+) site. Positions 171, 254, and 271 each coordinate Zn(2+).

Belongs to the iron-containing alcohol dehydrogenase family. The cofactor is Zn(2+).

It catalyses the reaction ethylene glycol + NAD(+) = glycolaldehyde + NADH + H(+). With respect to regulation, is subject to substrate inhibition. Oxidoreductase involved in the non-carboxylating pentose bisphosphate pathway, a nucleoside degradation pathway present in some halophilic archaea. Catalyzes the reduction of glycolaldehyde to ethylene glycol. Cannot catalyze the oxidation of glycerol 1-phosphate nor the reduction of dihydroxyacetone phosphate (DHAP). The chain is Glycolaldehyde reductase from Halobacterium salinarum (strain ATCC 700922 / JCM 11081 / NRC-1) (Halobacterium halobium).